The sequence spans 570 residues: Formate--tetrahydrofolate ligase (570 aa).

65–72 is a binding site for ATP; sequence TPFGEGKT.

Belongs to the formate--tetrahydrofolate ligase family.

It carries out the reaction (6S)-5,6,7,8-tetrahydrofolate + formate + ATP = (6R)-10-formyltetrahydrofolate + ADP + phosphate. The protein operates within one-carbon metabolism; tetrahydrofolate interconversion. The sequence is that of Formate--tetrahydrofolate ligase from Shewanella woodyi (strain ATCC 51908 / MS32).